Consider the following 232-residue polypeptide: tRNA1(Val) (adenine(37)-N6)-methyltransferase (232 aa).

This sequence belongs to the methyltransferase superfamily. tRNA (adenine-N(6)-)-methyltransferase family.

It localises to the cytoplasm. It carries out the reaction adenosine(37) in tRNA1(Val) + S-adenosyl-L-methionine = N(6)-methyladenosine(37) in tRNA1(Val) + S-adenosyl-L-homocysteine + H(+). Functionally, specifically methylates the adenine in position 37 of tRNA(1)(Val) (anticodon cmo5UAC). This is tRNA1(Val) (adenine(37)-N6)-methyltransferase from Haemophilus influenzae (strain PittEE).